The following is a 79-amino-acid chain: Conotoxin TxMEKL-021 (79 aa).

The signal sequence occupies residues 1-19 (MEKLTILLLVAVVLMSTQA). A propeptide spanning residues 20–47 (LPQGGGEKRPRENIRFLSKRKSNAERWR) is cleaved from the precursor. 3 disulfides stabilise this stretch: cysteine 51–cysteine 65, cysteine 58–cysteine 69, and cysteine 64–cysteine 75.

The protein belongs to the conotoxin O2 superfamily. As to expression, expressed by the venom duct.

It is found in the secreted. The polypeptide is Conotoxin TxMEKL-021 (Conus textile (Cloth-of-gold cone)).